The primary structure comprises 700 residues: MYKTFSMELAGRTLTIETGKLAQLANGSVLVRYGDTVVLSTATASATPREGVDFFPLSVDYEERLYAVGKIPGGFIKREGKPSEKAILTARVIDRPLRPLFPKDLRNDVAIVNTVLSVDQDNSPELAALLGSSIAVSISDIPFNGPVGAVILGLIDGEVIINPTEKQKEISQMYVTLAGTRNKIVMIEAGANEVPDEVMLDAIKKGHEEIKKIVDFIDGIVKEVGKPKFEYESAEVPEEIFNAVREYAYDKMREAVLAVDKQVRDKNIDDLTKEITEHFAEVFPEMEPAIKEAIYKLEKKVVREYILEEGRRVDGRRLDEIRPLSAEVGLLPRVHGSGLFTRGQTQVLSSVTLGAMGDVQILDGIDTEETKRYMHHYNFPGFSVGEAKSSRGPGRREIGHGALAERALEPVIPSEEEFPYTIRVVSEVLMSNGSTSQGSVCGSTLALMDAGVPIKKPVAGISAGLVVDENNPDRFVTFMDIQGIEDFFGDMDFKVAGTKDGITAIQVDIKIDGLTEEIIKQAFELTRKGRLYIIDNVLLKAIPEPRKQMSKYAPKIISTTINPDKIREVIGPGGKMINKIIDETGVKIDINDDGRVYIFSSDIQAGKRARSMIEAIAKDIEPGQVFLGRVIRVTSFGAFVEFLPGKEGLVHISKLDKKRVERVEDIVRVGDQILVKVIEIDKQGRVNLSRKDAMEDEWDK.

The Mg(2+) site is built by D486 and D492. One can recognise a KH domain in the interval 554-613 (PKIISTTINPDKIREVIGPGGKMINKIIDETGVKIDINDDGRVYIFSSDIQAGKRARSMI). The region spanning 623-691 (GQVFLGRVIR…KQGRVNLSRK (69 aa)) is the S1 motif domain.

It belongs to the polyribonucleotide nucleotidyltransferase family. It depends on Mg(2+) as a cofactor.

It is found in the cytoplasm. It carries out the reaction RNA(n+1) + phosphate = RNA(n) + a ribonucleoside 5'-diphosphate. Involved in mRNA degradation. Catalyzes the phosphorolysis of single-stranded polyribonucleotides processively in the 3'- to 5'-direction. This Acetivibrio thermocellus (strain ATCC 27405 / DSM 1237 / JCM 9322 / NBRC 103400 / NCIMB 10682 / NRRL B-4536 / VPI 7372) (Clostridium thermocellum) protein is Polyribonucleotide nucleotidyltransferase.